Consider the following 306-residue polypeptide: MIYSKRLILVVGPTGTKKSYLANMLAKKLNVPIISADAYQVYKELNAGVNKPSEKTLSEIKYHFISNISIFDEWSIAHFNKRAKEILEQAPDWTIVCGGSHLYVNSLINDYQLEKQELDTDLFDALDKLDNQEIFNQLCEYDFQEAIKIGKNNRKRLLRALYLFKKYGKKAKNDSKKFDYVVVKCMSDKEKLFPYLSKRLDEMIHDLNWTKEIEYLDKIITDKKLDKELIAMKALGYKEIYDAWKNNQPIDKEIINKKFKRLVKHQLTWTRNKFNDGMKQFTFNFFEDDANRTCDEIIEYIKSNHD.

12-19 (GPTGTKKS) provides a ligand contact to ATP.

It belongs to the IPP transferase family. In terms of assembly, monomer. It depends on Mg(2+) as a cofactor.

The enzyme catalyses adenosine(37) in tRNA + dimethylallyl diphosphate = N(6)-dimethylallyladenosine(37) in tRNA + diphosphate. In terms of biological role, catalyzes the transfer of a dimethylallyl group onto the adenine at position 37 in tRNAs that read codons beginning with uridine, leading to the formation of N6-(dimethylallyl)adenosine (i(6)A). The protein is tRNA dimethylallyltransferase of Mycoplasmoides gallisepticum (strain R(low / passage 15 / clone 2)) (Mycoplasma gallisepticum).